The sequence spans 1191 residues: Zinc finger protein ush (1191 aa).

Disordered regions lie at residues 1 to 153 (MLSS…PKYP) and 169 to 194 (PDAK…DTQA). Over residues 19 to 28 (VDSRDSKDLS) the composition is skewed to basic and acidic residues. Residues 61–73 (IDDDADEDAEFEE) are compositionally biased toward acidic residues. Phosphoserine is present on residues S116 and S118. Residues 130 to 151 (ATPPSEPEASPCPSPSPCPTPK) show a composition bias toward pro residues. The CCHC FOG-type 1 zinc-finger motif lies at 202 to 235 (LLKPARFMCLPCGIAFSSPSTLEAHQAYYCSHRI). C210, C213, H226, and C231 together coordinate Zn(2+). Residues 239–274 (DEAGSDKSGAGGSGATAGDAAGLTGGSTEPPAKMAR) form a disordered region. Over residues 254 to 266 (TAGDAAGLTGGST) the composition is skewed to low complexity. The C2H2-type 1 zinc-finger motif lies at 279–301 (YGCTQCSYSADKKVSLNRHMRMH). Positions 304-338 (SPAAPTLAGLPSLLQNGIAPPGVTPNPMEDSSSQQ) are disordered. Residues 335 to 368 (SSQQTDRYCSHCDIRFNNIKTYRAHKQHYCSSRR) form a CCHC FOG-type 2 zinc finger. The Zn(2+) site is built by C343, C346, H359, and C364. Disordered stretches follow at residues 361–413 (QHYC…ARNK), 504–540 (EPER…ESAP), and 601–635 (APSL…MSPP). Residues 383 to 394 (AGSGPGSAGGSI) show a composition bias toward gly residues. Low complexity-rich tracts occupy residues 509–523 (SAPS…AKSS), 602–613 (PSLPSSPSMSPS), and 620–635 (SPRS…MSPP). 2 CCHC FOG-type zinc fingers span residues 720-753 (YVKK…SARS) and 791-824 (PVAY…PKGG). 8 residues coordinate Zn(2+): C728, C731, H744, C749, C799, C802, H815, and C820. C2H2-type zinc fingers lie at residues 882-907 (NKCP…HGTV), 910-932 (YRCS…IRTH), and 983-1006 (FNCD…KLMH). The segment at 1011–1073 (INSPSISPDT…HENNNSPIAT (63 aa)) is disordered. S1013, S1015, and S1017 each carry phosphoserine. A compositionally biased stretch (polar residues) spans 1025–1040 (VTSNPTTNQHSNSDVS). The CCHC FOG-type 5 zinc finger occupies 1113–1146 (AAEVMKKYCSTCDISFNYVKTYLAHKQFYCKNKP). The Zn(2+) site is built by C1121, C1124, H1137, and C1142. Phosphoserine is present on S1156.

This sequence belongs to the FOG (Friend of GATA) family. Interacts with pnr, although weak this interaction is essential. Interacts with the isoform SrpNC of srp. Interacts with CtBP corepressor. First expressed in stage 5 at high levels in the primordium of the amnioserosa. Also expressed in germ band extending embryos in cells of the developing anterior and posterior midgut and in hemocyte precursors present in the cephalic mesoderm. In embryonic stage 8, it is expressed in blood cell precursors. By stage 10, it is expressed in hemocyte precursors that have spread throughout the lateral and ventral head mesoderm. By stage 11, it is expressed in the dorsal ectoderm and in precursor cells of the hemocytes and fat body. As embryogenesis proceeds, it is also expressed in stage 13 plasmatocytes migrating throughout the head mesoderm and down the ventral midline. By late embryogenesis, expression strongly decreases but remains in the dorsal ectoderm during dorsal closure, in cells within, or associated with, the central nervous system, and in plasmatocytes circulating throughout the embryonic hemolymph. During larval development, it is expressed in primary and secondary lobes of lymph glands. Expressed in the dorsal part of the thoracic imaginal disk.

It localises to the nucleus. Functionally, transcription regulator that modulates expression mediated by transcription factors of the GATA family such as pnr and srp. Represses transcription of proneural achaete-scute complex (AS-C), which is usually activated by pnr. Involved in cardiogenesis, blood, and eye development. During hematopoiesis, it is required to restrict the number of crystal cells, probably via its interaction with the isoform SrpNC of srp. Negatively regulates expression of sr. Probably acts by interacting with the GATA-type zinc finger of proteins such as pnr and srp, possibly antagonizing the interaction between the GATA-type zinc finger and some cofactor. This Drosophila melanogaster (Fruit fly) protein is Zinc finger protein ush (ush).